The chain runs to 125 residues: Small ribosomal subunit protein uS12 (125 aa).

The interval 1–27 (MPTINQLVRKGREKGEQKSTAPALKSC) is disordered. D89 bears the 3-methylthioaspartic acid mark. Positions 103–125 (DASGVQKRNQGRSKYGTKRPKKK) are disordered. Residues 111 to 125 (NQGRSKYGTKRPKKK) show a composition bias toward basic residues.

The protein belongs to the universal ribosomal protein uS12 family. Part of the 30S ribosomal subunit. Contacts proteins S8 and S17. May interact with IF1 in the 30S initiation complex.

With S4 and S5 plays an important role in translational accuracy. Functionally, interacts with and stabilizes bases of the 16S rRNA that are involved in tRNA selection in the A site and with the mRNA backbone. Located at the interface of the 30S and 50S subunits, it traverses the body of the 30S subunit contacting proteins on the other side and probably holding the rRNA structure together. The combined cluster of proteins S8, S12 and S17 appears to hold together the shoulder and platform of the 30S subunit. The polypeptide is Small ribosomal subunit protein uS12 (Syntrophomonas wolfei subsp. wolfei (strain DSM 2245B / Goettingen)).